Consider the following 617-residue polypeptide: Solute carrier family 2, facilitated glucose transporter member 12 (617 aa).

The tract at residues 1–29 (MVPVENTEGPSLLNQKGTAVETEGSGSRH) is disordered. Residues 1-44 (MVPVENTEGPSLLNQKGTAVETEGSGSRHPPWARGCGMFTFLSS) lie on the Cytoplasmic side of the membrane. Over residues 8 to 17 (EGPSLLNQKG) the composition is skewed to polar residues. Residues 45-65 (VTAAVSGLLVGYELGIISGAL) traverse the membrane as a helical segment. The Extracellular segment spans residues 66 to 80 (LQIKTLLALSCHEQE). Residues 81-101 (MVVSSLVIGALLASLTGGVLI) traverse the membrane as a helical segment. Residues 102 to 115 (DRYGRRTAIILSSC) lie on the Cytoplasmic side of the membrane. Residues 116–136 (LLGLGSLVLILSLSYTVLIVG) form a helical membrane-spanning segment. A topological domain (extracellular) is located at residue R137. Residues 138-158 (IAIGVSISLSSIATCVYIAEI) traverse the membrane as a helical segment. At 159 to 172 (APQHRRGLLVSLNE) the chain is on the cytoplasmic side. The chain crosses the membrane as a helical span at residues 173-193 (LMIVIGILSAYISNYAFANVF). Over 194–197 (HGWK) the chain is Extracellular. A helical membrane pass occupies residues 198 to 218 (YMFGLVIPLGVLQAIAMYFLP). The Cytoplasmic portion of the chain corresponds to 219 to 278 (PSPRFLVMKGQEGAASKVLGRLRALSDTTEELTVIKSSLKDEYQYSFWDLFRSKDNMRTR). Residues 279–299 (IMIGLTLVFFVQITGQPNILF) traverse the membrane as a helical segment. At 300 to 317 (YASTVLKSVGFQSNEAAS) the chain is on the extracellular side. A helical membrane pass occupies residues 318-338 (LASTGVGVVKVISTIPATLLV). At 339–345 (DHVGSKT) the chain is on the cytoplasmic side. Residues 346–366 (FLCIGSSVMAASLVTMGIVNL) traverse the membrane as a helical segment. The Extracellular portion of the chain corresponds to 367-466 (NIHMNFTHIC…PAFLKWLSLA (100 aa)). N-linked (GlcNAc...) asparagine glycans are attached at residues N371, N383, N396, and N401. A helical membrane pass occupies residues 467-487 (SLLVYVAAFSIGLGPMPWLVL). The Cytoplasmic segment spans residues 488–498 (SEIFPGGIRGR). A helical membrane pass occupies residues 499 to 519 (AMALTSSMNWGINLLISLTFL). The Extracellular portion of the chain corresponds to 520–528 (TVTDLIGLP). The chain crosses the membrane as a helical span at residues 529-549 (WVCFIYTIMSLASLLFVVMFI). The Cytoplasmic portion of the chain corresponds to 550–617 (PETKGCSLEQ…GQSRQLSPET (68 aa)).

Belongs to the major facilitator superfamily. Sugar transporter (TC 2.A.1.1) family. Glucose transporter subfamily. As to expression, predominantly expressed in skeletal muscle, heart and prostate, with lower levels in brain, placenta and kidney.

It is found in the cell membrane. The protein resides in the endomembrane system. It localises to the cytoplasm. Its subcellular location is the perinuclear region. The catalysed reaction is D-glucose(out) = D-glucose(in). In terms of biological role, insulin-independent facilitative glucose transporter. This is Solute carrier family 2, facilitated glucose transporter member 12 from Homo sapiens (Human).